The sequence spans 238 residues: Ribonuclease PH (238 aa).

Residues Arg86 and 124 to 126 (GTR) contribute to the phosphate site.

It belongs to the RNase PH family. As to quaternary structure, homohexameric ring arranged as a trimer of dimers.

It carries out the reaction tRNA(n+1) + phosphate = tRNA(n) + a ribonucleoside 5'-diphosphate. Its function is as follows. Phosphorolytic 3'-5' exoribonuclease that plays an important role in tRNA 3'-end maturation. Removes nucleotide residues following the 3'-CCA terminus of tRNAs; can also add nucleotides to the ends of RNA molecules by using nucleoside diphosphates as substrates, but this may not be physiologically important. Probably plays a role in initiation of 16S rRNA degradation (leading to ribosome degradation) during starvation. The chain is Ribonuclease PH from Escherichia coli O6:K15:H31 (strain 536 / UPEC).